A 547-amino-acid polypeptide reads, in one-letter code: MASRRLLSSFLRSSTRRSLRPSFSNPRPSFLTSYCSSPASILRRYATAAPAKEPAASKPAGTAGTGKGTITDEKTGAGAIGQVCQIIGAVVDVKFEEGLPPIMTALEVIDFEIRLVLEVAPSLGENTVRTIAMDGTEGLVRGQKVLNTGAPITIPVGRATLGRIINVIGEPIDHRGEIKTDQYLPIHREAPTFVDQATEQQILVTGIKVVDLLAPYQKGGKIGLFGGDWVGKTVLIMELINNVAKAHAVFAGVGERTREGNDLYKEMMESGVIKLGDQQAESKCALVYGQMNEPPGSRARVGLTGLTVAEHFRDAEGEDVLLFVDKRFRFTQANSEVSALLGRIPSAVGYQPTLATDLGGLQERITTTKKGSITSVQAIYVPADDLTDPAPATTFAHLDATTVLSRQISELGIYPAVDPLDSTSRMLTPESGEEHYNTARGVQKVLQNYKNLQDIIAILGMDELSEDDKLTVARARKIQRFLSQPFHVAEIFTGAPGKYVELKECVTSFQGVLDGKYDDLPEQSFYMLGGIEEVIAKAEKMAKENPQ.

A mitochondrion-targeting transit peptide spans 1 to 45 (MASRRLLSSFLRSSTRRSLRPSFSNPRPSFLTSYCSSPASILRRY). Positions 52–62 (KEPAASKPAGT) are enriched in low complexity. Positions 52 to 74 (KEPAASKPAGTAGTGKGTITDEK) are disordered. Position 226–233 (226–233 (GGDWVGKT)) interacts with ATP.

This sequence belongs to the ATPase alpha/beta chains family. In terms of assembly, F-type ATPases have 2 components, CF(1) - the catalytic core - and CF(0) - the membrane proton channel. CF(1) has five subunits: alpha(3), beta(3), gamma(1), delta(1), epsilon(1). CF(0) has three main subunits: a, b and c.

It localises to the mitochondrion. It is found in the mitochondrion inner membrane. The catalysed reaction is ATP + H2O + 4 H(+)(in) = ADP + phosphate + 5 H(+)(out). Mitochondrial membrane ATP synthase (F(1)F(0) ATP synthase or Complex V) produces ATP from ADP in the presence of a proton gradient across the membrane which is generated by electron transport complexes of the respiratory chain. F-type ATPases consist of two structural domains, F(1) - containing the extramembraneous catalytic core, and F(0) - containing the membrane proton channel, linked together by a central stalk and a peripheral stalk. During catalysis, ATP synthesis in the catalytic domain of F(1) is coupled via a rotary mechanism of the central stalk subunits to proton translocation. Subunits alpha and beta form the catalytic core in F(1). Rotation of the central stalk against the surrounding alpha(3)beta(3) subunits leads to hydrolysis of ATP in three separate catalytic sites on the beta subunits. The sequence is that of ATP synthase subunit beta, mitochondrial (ATPB) from Daucus carota (Wild carrot).